Consider the following 93-residue polypeptide: UPF0358 protein BPUM_1375 (93 aa).

It belongs to the UPF0358 family.

In Bacillus pumilus (strain SAFR-032), this protein is UPF0358 protein BPUM_1375.